Consider the following 335-residue polypeptide: 2-acylglycerol O-acyltransferase 1 (335 aa).

2 helical membrane passes run 24 to 44 (WVFSFLLLAQCCIGIFLSLVL) and 47 to 67 (LWLILALYVLWLYLDWETPQA). N-linked (GlcNAc...) asparagine glycans are attached at residues Asn77, Asn125, and Asn180.

This sequence belongs to the diacylglycerol acyltransferase family.

The protein localises to the endoplasmic reticulum membrane. The enzyme catalyses a 2-acylglycerol + an acyl-CoA = a 1,2-diacylglycerol + CoA. It carries out the reaction a 2-acylglycerol + an acyl-CoA = a 1,2-diacyl-sn-glycerol + CoA. It catalyses the reaction a 2-acylglycerol + an acyl-CoA = a 2,3-diacyl-sn-glycerol + CoA. The catalysed reaction is a 1-acylglycerol + an acyl-CoA = a 1,2-diacylglycerol + CoA. The enzyme catalyses a 1-acylglycerol + an acyl-CoA = a 1,3-diacylglycerol + CoA. It carries out the reaction a 1-acyl-sn-glycerol + an acyl-CoA = a 1,3-diacyl-sn-glycerol + CoA. It catalyses the reaction a 3-acyl-sn-glycerol + an acyl-CoA = a 1,3-diacyl-sn-glycerol + CoA. It functions in the pathway glycerolipid metabolism; triacylglycerol biosynthesis. Involved in glycerolipid synthesis and lipid metabolism. Catalyzes the formation of diacylglycerol, the precursor of triacylglycerol, by transferring the acyl chain of a fatty acyl-CoA to a monoacylglycerol, mainly at the sn-1 or sn-3 positions. It uses both sn-2-monoacylglycerol (2-acylglycerol) and sn-1-monoacylglycerol (1-acyl-sn-glycerol) equally well as substrates, and uses sn-3-monoacylglycerol (3-acyl-sn-glycerol) with lower efficiency. The polypeptide is 2-acylglycerol O-acyltransferase 1 (mogat1) (Xenopus tropicalis (Western clawed frog)).